Consider the following 236-residue polypeptide: Phosphoribosylaminoimidazole-succinocarboxamide synthase (236 aa).

Belongs to the SAICAR synthetase family.

It carries out the reaction 5-amino-1-(5-phospho-D-ribosyl)imidazole-4-carboxylate + L-aspartate + ATP = (2S)-2-[5-amino-1-(5-phospho-beta-D-ribosyl)imidazole-4-carboxamido]succinate + ADP + phosphate + 2 H(+). It participates in purine metabolism; IMP biosynthesis via de novo pathway; 5-amino-1-(5-phospho-D-ribosyl)imidazole-4-carboxamide from 5-amino-1-(5-phospho-D-ribosyl)imidazole-4-carboxylate: step 1/2. The chain is Phosphoribosylaminoimidazole-succinocarboxamide synthase from Chlorobium phaeobacteroides (strain BS1).